Consider the following 320-residue polypeptide: tRNA U34 carboxymethyltransferase (320 aa).

Carboxy-S-adenosyl-L-methionine contacts are provided by residues Lys89, Trp103, Lys108, Gly128, Asp150–Thr152, Ile179–Glu180, Met194, Tyr198, and Arg313.

It belongs to the class I-like SAM-binding methyltransferase superfamily. CmoB family. Homotetramer.

The catalysed reaction is carboxy-S-adenosyl-L-methionine + 5-hydroxyuridine(34) in tRNA = 5-carboxymethoxyuridine(34) in tRNA + S-adenosyl-L-homocysteine + H(+). Functionally, catalyzes carboxymethyl transfer from carboxy-S-adenosyl-L-methionine (Cx-SAM) to 5-hydroxyuridine (ho5U) to form 5-carboxymethoxyuridine (cmo5U) at position 34 in tRNAs. The polypeptide is tRNA U34 carboxymethyltransferase (Actinobacillus pleuropneumoniae serotype 3 (strain JL03)).